Here is a 207-residue protein sequence, read N- to C-terminus: MEQHVIMALTVLIVVPVIFTIFAKKPSLIPTPIQNVFEIYIEFIDNLIKENMGEKGRKYFPLIASIGLFVFFGNLLGIIPGLESPTANLNTTMALALLVFFIYNFEGIRENGIGYFKHFLGPVPAMAPVFVIIELLSHLSRPVTLALRLFANMTGGELISVVLIMLVPFLIPMPVMLIHLIAVFLQTYVFVVLTTVYIAGAITHAEH.

The next 6 membrane-spanning stretches (helical) occupy residues 3–23, 62–82, 88–108, 119–139, 158–178, and 180–200; these read QHVI…TIFA, LIAS…IPGL, NLNT…FEGI, FLGP…LSHL, LISV…VMLI, and LIAV…YIAG.

It belongs to the ATPase A chain family. In terms of assembly, F-type ATPases have 2 components, CF(1) - the catalytic core - and CF(0) - the membrane proton channel. CF(1) has five subunits: alpha(3), beta(3), gamma(1), delta(1), epsilon(1). CF(0) has three main subunits: a(1), b(2) and c(9-12). The alpha and beta chains form an alternating ring which encloses part of the gamma chain. CF(1) is attached to CF(0) by a central stalk formed by the gamma and epsilon chains, while a peripheral stalk is formed by the delta and b chains.

It is found in the cell inner membrane. Key component of the proton channel; it plays a direct role in the translocation of protons across the membrane. The sequence is that of ATP synthase subunit a from Sulfurihydrogenibium sp. (strain YO3AOP1).